Here is a 493-residue protein sequence, read N- to C-terminus: EGF-containing fibulin-like extracellular matrix protein 1 (493 aa).

The N-terminal stretch at 1–17 (MLKALFLTMLTLALVKS) is a signal peptide. The EGF-like 1; atypical domain maps to 26–71 (YTQCTDGYEWDPVRQQCKDIDECDIVPDACKGGMKCVNHYGGYLCL). The EGF-like 2; calcium-binding domain occupies 173–213 (DIDECTAGTHNCRADQVCINLRGSFACQCPPGYQKRGEQCV). Intrachain disulfides connect C177/C190, C184/C199, C201/C212, C218/C228, C224/C237, C239/C252, C258/C268, C264/C277, C279/C292, C298/C309, C305/C318, C320/C332, C338/C350, C344/C359, and C365/C377. An EGF-like 3; calcium-binding domain is found at 214–253 (DIDECTIPPYCHQRCVNTPGSFYCQCSPGFQLAANNYTCV). N249 carries an N-linked (GlcNAc...) asparagine glycan. Residues 254–293 (DINECDASNQCAQQCYNILGSFICQCNQGYELSSDRLNCE) form the EGF-like 4; calcium-binding domain. The tract at residues 259-493 (DASNQCAQQC…LTIIVGPFSF (235 aa)) is mediates interaction with TIMP3. The EGF-like 5; calcium-binding domain maps to 294–333 (DIDECRTSSYLCQYQCVNEPGKFSCMCPQGYQVVRSRTCQ). Residues 334 to 378 (DINECETTNECREDEMCWNYHGGFRCYPRNPCQDPYILTPENRCV) enclose the EGF-like 6; calcium-binding domain.

Belongs to the fibulin family. As to quaternary structure, interacts with ECM1. Interacts with TIMP3. As to expression, in the eye, associated with photoreceptor outer and inner segment regions, the nerve fiber layer, outer nuclear layer and inner and outer plexiform layers of the retina.

Its subcellular location is the secreted. The protein localises to the extracellular space. It is found in the extracellular matrix. In terms of biological role, binds EGFR, the EGF receptor, inducing EGFR autophosphorylation and the activation of downstream signaling pathways. May play a role in cell adhesion and migration. May function as a negative regulator of chondrocyte differentiation. In the olfactory epithelium, it may regulate glial cell migration, differentiation and the ability of glial cells to support neuronal neurite outgrowth. The sequence is that of EGF-containing fibulin-like extracellular matrix protein 1 (EFEMP1) from Homo sapiens (Human).